Reading from the N-terminus, the 164-residue chain is Class I hydrophobin rodA (164 aa).

Positions 1–18 (MRFSISALVLGLAATVYA) are cleaved as a signal peptide. The N-linked (GlcNAc...) asparagine glycan is linked to asparagine 50. 4 cysteine pairs are disulfide-bonded: cysteine 60/cysteine 138, cysteine 68/cysteine 132, cysteine 69/cysteine 109, and cysteine 139/cysteine 157.

This sequence belongs to the fungal hydrophobin family. As to quaternary structure, self-assembles to form functional amyloid fibrils called rodlets. Self-assembly into fibrillar rodlets occurs spontaneously at hydrophobic:hydrophilic interfaces and the rodlets further associate laterally to form amphipathic monolayers.

Its subcellular location is the secreted. It localises to the cell wall. Aerial growth, conidiation, and dispersal of filamentous fungi in the environment rely upon a capability of their secreting small amphipathic proteins called hydrophobins (HPBs) with low sequence identity. Class I can self-assemble into an outermost layer of rodlet bundles on aerial cell surfaces, conferring cellular hydrophobicity that supports fungal growth, development and dispersal; whereas Class II form highly ordered films at water-air interfaces through intermolecular interactions but contribute nothing to the rodlet structure. RodA is a class I hydrophobin involved in the cell surface hydrophobicity and conidiation under aerial conditions. The surface rodlet layer of the conidial cell wall makes airborne conidia of filamentous fungi inert to both innate and adaptive immunity. The chain is Class I hydrophobin rodA from Penicillium camembertii.